The following is a 553-amino-acid chain: LIM domain-containing protein B (553 aa).

Residues 43 to 115 are disordered; sequence LTYKDPNVST…SINNNISNNN (73 aa). The segment covering 99–114 has biased composition (low complexity); sequence GPGLPNNSINNNISNN. 5 LIM zinc-binding domains span residues 205–262, 263–322, 328–387, 388–447, and 448–505; these read PICG…ELFS, PRCF…RQKR, EICS…KQIL, NICG…FFGR, and QCFK…LPKE. The tract at residues 534-553 is disordered; it reads ELKKERERAAKEKEKESKAK.

Its subcellular location is the cytoplasm. It is found in the cell cortex. The protein resides in the cytoskeleton. In terms of biological role, regulates and controls rearrangements of the actin cytoskeleton. Required for tip formation, morphogenesis, cell adhesion and motility, chemotaxis and aggregates formation. May function downstream of paxB. In Dictyostelium discoideum (Social amoeba), this protein is LIM domain-containing protein B (limB).